We begin with the raw amino-acid sequence, 337 residues long: Putative NAC domain-containing protein 94 (337 aa).

In terms of domain architecture, NAC spans 20–191 (VLPGFRFHPT…AWAICRIFKK (172 aa)).

The protein localises to the nucleus. This Arabidopsis thaliana (Mouse-ear cress) protein is Putative NAC domain-containing protein 94 (ANAC094).